The following is an 855-amino-acid chain: MSEARRDSTSSLQRKKPPWLKLDIPSAVPPTAEEPSFLQPLRRQAFLRSVSMPAETAHISSPHHELRRSVLQRQTSITQTIRRGTADWFGVSKDSDSTQKWQRKSIRHCSQRYGKLKPQVLRELDLPSQDNVSLTSTETPPPLYVGPCQLGMQKIIDPLARGRAFRVADDTAEGLSAPHTPVTPGAASLCSFSSSRSGFHRLPRRRKRESVAKMSFRAAAALMKGRSVRDGTLRRAQRRSFTPASFLEEDTTDFPDELDTSFFAREGILHEELSTYPDEVFESPSEAALKDWEKAPEQADLTGGALDRSELERSHLMLPLERGWRKQKEGAAAPQPKVRLRQEVVSTAGPRRGQRIAVPVRKLFAREKRPYGLGMVGRLTNRTYRKRIDSFVKRQIEDMDDHRPFFTYWLTFVHSLVTILAVCIYGIAPVGFSQHETVDSVLRNRGVYENVKYVQQENFWIGPSSEALIHLGAKFSPCMRQDPQVHSFIRSAREREKHSACCVRNDRSGCVQTSEEECSSTLAVWVKWPIHPSAPELAGHKRQFGSVCHQDPRVCDEPSSEDPHEWPEDITKWPICTKNSAGNHTNHPHMDCVITGRPCCIGTKGRCEITSREYCDFMRGYFHEEATLCSQVHCMDDVCGLLPFLNPEVPDQFYRLWLSLFLHAGILHCLVSICFQMTVLRDLEKLAGWHRIAIIYLLSGVTGNLASAIFLPYRAEVGPAGSQFGILACLFVELFQSWQILARPWRAFFKLLAVVLFLFTFGLLPWIDNFAHISGFISGLFLSFAFLPYISFGKFDLYRKRCQIIIFQVVFLGLLAGLVVLFYFYPVRCEWCEFLTCIPFTDKFCEKYELDAQLH.

The tract at residues 1–36 (MSEARRDSTSSLQRKKPPWLKLDIPSAVPPTAEEPS) is disordered. At 1–411 (MSEARRDSTS…HRPFFTYWLT (411 aa)) the chain is on the cytoplasmic side. Serine 76 and serine 176 each carry phosphoserine. 2 positions are modified to phosphothreonine: threonine 180 and threonine 183. A Phosphoserine modification is found at serine 390. A helical membrane pass occupies residues 412–432 (FVHSLVTILAVCIYGIAPVGF). Topologically, residues 433–655 (SQHETVDSVL…NPEVPDQFYR (223 aa)) are lumenal. Asparagine 583 carries N-linked (GlcNAc...) asparagine glycosylation. Residues 656 to 676 (LWLSLFLHAGILHCLVSICFQ) form a helical membrane-spanning segment. The Cytoplasmic portion of the chain corresponds to 677–691 (MTVLRDLEKLAGWHR). A helical membrane pass occupies residues 692-712 (IAIIYLLSGVTGNLASAIFLP). Residues 713 to 714 (YR) are Lumenal-facing. The helical transmembrane segment at 715 to 735 (AEVGPAGSQFGILACLFVELF) threads the bilayer. Over 736 to 746 (QSWQILARPWR) the chain is Cytoplasmic. The helical transmembrane segment at 747–767 (AFFKLLAVVLFLFTFGLLPWI) threads the bilayer. Residues 768–772 (DNFAH) are Lumenal-facing. The helical transmembrane segment at 773–793 (ISGFISGLFLSFAFLPYISFG) threads the bilayer. Topologically, residues 794-803 (KFDLYRKRCQ) are cytoplasmic. Residues 804 to 824 (IIIFQVVFLGLLAGLVVLFYF) form a helical membrane-spanning segment. Over 825–855 (YPVRCEWCEFLTCIPFTDKFCEKYELDAQLH) the chain is Lumenal.

This sequence belongs to the peptidase S54 family. Homodimer, or homooligomer. Interacts with TGFA and HBEGF. Interacts with EGF; may retain EGF in the endoplasmic reticulum and regulates its degradation through the endoplasmic reticulum-associated degradation (ERAD). Interacts (via cytoplasmic N-terminus) with FRMD8/iTAP; this interaction leads to mutual protein stabilization. Interacts with ADAM17/TACE.

It is found in the endoplasmic reticulum membrane. The protein resides in the golgi apparatus membrane. Regulates ADAM17 protease, a sheddase of the epidermal growth factor (EGF) receptor ligands and TNF, thereby plays a role in sleep, cell survival, proliferation, migration and inflammation. Does not exhibit any protease activity on its own. The sequence is that of Inactive rhomboid protein 1 (RHBDF1) from Papio anubis (Olive baboon).